We begin with the raw amino-acid sequence, 697 residues long: uncharacterized protein (697 aa).

The next 5 helical transmembrane spans lie at L45–L65, T86–V106, V128–A148, V198–L218, and H280–G300. 2 ABC transporter domains span residues V251 to H473 and L477 to M696. Residues G285–T292 and G514–S521 each bind ATP. The helical transmembrane segment at T522–G542 threads the bilayer.

This sequence belongs to the ABC transporter superfamily.

Its subcellular location is the cell membrane. This is an uncharacterized protein from Mycobacterium tuberculosis (strain CDC 1551 / Oshkosh).